Consider the following 358-residue polypeptide: Electron transfer flavoprotein subunit alpha, mitochondrial (358 aa).

Residue 298–326 (LYMAFGVSGAIQHLAGMRDSKVIVAVNKD) coordinates FAD.

Belongs to the ETF alpha-subunit/FixB family. In terms of assembly, heterodimer of an alpha and a beta subunit. Requires FAD as cofactor.

It is found in the mitochondrion matrix. In terms of biological role, the electron transfer flavoprotein serves as a specific electron acceptor for several dehydrogenases, including five acyl-CoA dehydrogenases, glutaryl-CoA and sarcosine dehydrogenase. It transfers the electrons to the main mitochondrial respiratory chain via ETF-ubiquinone oxidoreductase (ETF dehydrogenase). The protein is Electron transfer flavoprotein subunit alpha, mitochondrial (ETFA) of Oryza sativa subsp. indica (Rice).